The following is a 225-amino-acid chain: Membrane protein (225 aa).

The Virion surface portion of the chain corresponds to 1-20 (MPNETNCTLDFEQSVQLFKE). A helical transmembrane segment spans residues 21 to 41 (YNLFITAFLLFLTIILQYGYA). Residues 42 to 51 (TRSKVIYTLK) are Intravirion-facing. The helical transmembrane segment at 52 to 72 (MIVLWCFWPLNIAVGVISCTY) threads the bilayer. At 73-77 (PPNTG) the chain is on the virion surface side. A helical transmembrane segment spans residues 78–98 (GLVAAIILTVFACLSFVGYWI). Over 99 to 225 (QSIRLFKRCR…VATGGSSLYT (127 aa)) the chain is Intravirion.

Belongs to the gammacoronaviruses M protein family. Homomultimer. Interacts with envelope E protein in the budding compartment of the host cell, which is located between endoplasmic reticulum and the Golgi complex. Forms a complex with HE and S proteins. Interacts with nucleocapsid N protein. This interaction probably participates in RNA packaging into the virus.

The protein localises to the virion membrane. The protein resides in the host Golgi apparatus membrane. Functionally, component of the viral envelope that plays a central role in virus morphogenesis and assembly via its interactions with other viral proteins. The sequence is that of Membrane protein from Avian infectious bronchitis virus (strain Beaudette) (IBV).